The primary structure comprises 425 residues: Bifunctional phosphoribosylaminoimidazole carboxylase/phosphoribosylaminoimidazole succinocarboxamide synthetase (425 aa).

The residue at position 2 (alanine 2) is an N-acetylalanine. The SAICAR synthetase domain stretch occupies residues 2–260 (ATAEVLNIGK…WVAERVELLL (259 aa)). Tyrosine 22 is modified (phosphotyrosine). Serine 27 carries the phosphoserine modification. Lysine 36 is modified (N6-acetyllysine). Serine 107 carries the post-translational modification Phosphoserine. Threonine 238 carries the post-translational modification Phosphothreonine. Lysine 247 is subject to N6-acetyllysine. A linker region spans residues 261–266 (KSESQC). The AIR carboxylase domain stretch occupies residues 267-425 (RVVVLMGSTS…ADKKIRECNL (159 aa)). Residue serine 274 is modified to Phosphoserine. Position 332 (serine 332) interacts with CO2.

The protein in the N-terminal section; belongs to the SAICAR synthetase family. This sequence in the C-terminal section; belongs to the AIR carboxylase family. Class II subfamily. In terms of assembly, homooctamer.

It catalyses the reaction 5-amino-1-(5-phospho-D-ribosyl)imidazole-4-carboxylate + L-aspartate + ATP = (2S)-2-[5-amino-1-(5-phospho-beta-D-ribosyl)imidazole-4-carboxamido]succinate + ADP + phosphate + 2 H(+). The catalysed reaction is 5-amino-1-(5-phospho-D-ribosyl)imidazole-4-carboxylate + H(+) = 5-amino-1-(5-phospho-beta-D-ribosyl)imidazole + CO2. The protein operates within purine metabolism; IMP biosynthesis via de novo pathway; 5-amino-1-(5-phospho-D-ribosyl)imidazole-4-carboxamide from 5-amino-1-(5-phospho-D-ribosyl)imidazole-4-carboxylate: step 1/2. It participates in purine metabolism; IMP biosynthesis via de novo pathway; 5-amino-1-(5-phospho-D-ribosyl)imidazole-4-carboxylate from 5-amino-1-(5-phospho-D-ribosyl)imidazole (carboxylase route): step 1/1. In terms of biological role, bifunctional phosphoribosylaminoimidazole carboxylase and phosphoribosylaminoimidazole succinocarboxamide synthetase catalyzing two reactions of the de novo purine biosynthetic pathway. This chain is Bifunctional phosphoribosylaminoimidazole carboxylase/phosphoribosylaminoimidazole succinocarboxamide synthetase, found in Homo sapiens (Human).